Here is a 731-residue protein sequence, read N- to C-terminus: Catalase-peroxidase (731 aa).

Residues tryptophan 98–tyrosine 227 constitute a cross-link (tryptophyl-tyrosyl-methioninium (Trp-Tyr) (with M-254)). Residue histidine 99 is the Proton acceptor of the active site. Positions tyrosine 227–methionine 254 form a cross-link, tryptophyl-tyrosyl-methioninium (Tyr-Met) (with W-98). Histidine 269 contacts heme b.

It belongs to the peroxidase family. Peroxidase/catalase subfamily. In terms of assembly, homodimer or homotetramer. The cofactor is heme b. Formation of the three residue Trp-Tyr-Met cross-link is important for the catalase, but not the peroxidase activity of the enzyme.

The enzyme catalyses H2O2 + AH2 = A + 2 H2O. It catalyses the reaction 2 H2O2 = O2 + 2 H2O. Bifunctional enzyme with both catalase and broad-spectrum peroxidase activity. This Sphingopyxis alaskensis (strain DSM 13593 / LMG 18877 / RB2256) (Sphingomonas alaskensis) protein is Catalase-peroxidase.